Here is a 374-residue protein sequence, read N- to C-terminus: Dispase autolysis-inducing protein (374 aa).

Residues 1-26 (MKRMGWAVTAAVTTIVLAQSSLAAQA) form the signal peptide.

It is found in the secreted. In terms of biological role, induces autolysis of dispase and thermolysin. The sequence is that of Dispase autolysis-inducing protein (daip) from Streptomyces mobaraensis (Streptoverticillium mobaraense).